A 124-amino-acid polypeptide reads, in one-letter code: Hemoglobin subunit alpha (124 aa).

The Globin domain occupies 1 to 124 (PLSAADKTII…VAKALSSHYR (124 aa)). Histidine 57 is a binding site for O2. Histidine 79 is a heme b binding site.

It belongs to the globin family. Hb 1 is a heterotetramer of two alpha and two beta-1 chains. Hb 2 is a heterotetramer of two alpha and two beta-2 chains. Hb 3 is a heterotetramer of two alpha and two beta-3 chains. In terms of tissue distribution, red blood cells (at protein level).

Involved in oxygen transport from gills to the various peripheral tissues. The polypeptide is Hemoglobin subunit alpha (Somniosus microcephalus (Greenland sleeper shark)).